The chain runs to 346 residues: MRLSDFRYTLPKTAVAEYPSEPRDSCKLMVLDRRKKTTDHKQFSDLLDYFKKGDVLVLNDTKVFPARLYGNKEKTSAKIEVFLLRELNKQAGLWDVLVEPARKVRVGNKIYFPNDLVAEVVDNTTSRGRTIRFLNPDIDIFSIVEKVGQMPIPPYIKRDPEEEDKERYQTVFARIPGAVVAPLAGLHFTNPLLKAIQDKGVEIISLTLHPGLSTFREVEVEDISKHKMDSEYYNVPYSCAKVINSIKEKKSGRVFAVGTTVCRALEANATVEGRIKFGEGWTDKYIYPPYDFKVVDALITNFHQPESTLLMLVSAFAEHDFLMKNYKLALKSDYKFLGYGDAMLIF.

The protein belongs to the QueA family. Monomer.

It localises to the cytoplasm. The catalysed reaction is 7-aminomethyl-7-carbaguanosine(34) in tRNA + S-adenosyl-L-methionine = epoxyqueuosine(34) in tRNA + adenine + L-methionine + 2 H(+). The protein operates within tRNA modification; tRNA-queuosine biosynthesis. Functionally, transfers and isomerizes the ribose moiety from AdoMet to the 7-aminomethyl group of 7-deazaguanine (preQ1-tRNA) to give epoxyqueuosine (oQ-tRNA). The protein is S-adenosylmethionine:tRNA ribosyltransferase-isomerase of Chloroherpeton thalassium (strain ATCC 35110 / GB-78).